A 149-amino-acid chain; its full sequence is Nucleoside diphosphate kinase (149 aa).

ATP is bound by residues K9, F57, R85, T91, R102, and N112. The active-site Pros-phosphohistidine intermediate is the H115.

It belongs to the NDK family. Mg(2+) is required as a cofactor.

It is found in the cytoplasm. It catalyses the reaction a 2'-deoxyribonucleoside 5'-diphosphate + ATP = a 2'-deoxyribonucleoside 5'-triphosphate + ADP. It carries out the reaction a ribonucleoside 5'-diphosphate + ATP = a ribonucleoside 5'-triphosphate + ADP. Its function is as follows. Major role in the synthesis of nucleoside triphosphates other than ATP. The ATP gamma phosphate is transferred to the NDP beta phosphate via a ping-pong mechanism, using a phosphorylated active-site intermediate. The polypeptide is Nucleoside diphosphate kinase (Methanospirillum hungatei JF-1 (strain ATCC 27890 / DSM 864 / NBRC 100397 / JF-1)).